A 144-amino-acid polypeptide reads, in one-letter code: Large ribosomal subunit protein uL16m (144 aa).

Belongs to the universal ribosomal protein uL16 family.

The protein localises to the mitochondrion. This chain is Large ribosomal subunit protein uL16m (mrpl16), found in Dictyostelium discoideum (Social amoeba).